The sequence spans 348 residues: Holliday junction branch migration complex subunit RuvB (348 aa).

Residues 1-181 (MEERMITPQQ…FGVISRLEFY (181 aa)) form a large ATPase domain (RuvB-L) region. ATP is bound by residues leucine 20, arginine 21, glycine 62, lysine 65, threonine 66, threonine 67, arginine 171, tyrosine 181, and arginine 218. Threonine 66 is a Mg(2+) binding site. The segment at 182 to 252 (EVEDLIRIIT…LAGKSLDRLE (71 aa)) is small ATPAse domain (RuvB-S). The interval 255–348 (PAGLDRIDQK…GDSLFDAAED (94 aa)) is head domain (RuvB-H). Residues arginine 310 and arginine 315 each coordinate DNA. Residues 329-348 (VNSSHQEGGQGDSLFDAAED) form a disordered region.

This sequence belongs to the RuvB family. As to quaternary structure, homohexamer. Forms an RuvA(8)-RuvB(12)-Holliday junction (HJ) complex. HJ DNA is sandwiched between 2 RuvA tetramers; dsDNA enters through RuvA and exits via RuvB. An RuvB hexamer assembles on each DNA strand where it exits the tetramer. Each RuvB hexamer is contacted by two RuvA subunits (via domain III) on 2 adjacent RuvB subunits; this complex drives branch migration. In the full resolvosome a probable DNA-RuvA(4)-RuvB(12)-RuvC(2) complex forms which resolves the HJ.

It localises to the cytoplasm. It catalyses the reaction ATP + H2O = ADP + phosphate + H(+). The RuvA-RuvB-RuvC complex processes Holliday junction (HJ) DNA during genetic recombination and DNA repair, while the RuvA-RuvB complex plays an important role in the rescue of blocked DNA replication forks via replication fork reversal (RFR). RuvA specifically binds to HJ cruciform DNA, conferring on it an open structure. The RuvB hexamer acts as an ATP-dependent pump, pulling dsDNA into and through the RuvAB complex. RuvB forms 2 homohexamers on either side of HJ DNA bound by 1 or 2 RuvA tetramers; 4 subunits per hexamer contact DNA at a time. Coordinated motions by a converter formed by DNA-disengaged RuvB subunits stimulates ATP hydrolysis and nucleotide exchange. Immobilization of the converter enables RuvB to convert the ATP-contained energy into a lever motion, pulling 2 nucleotides of DNA out of the RuvA tetramer per ATP hydrolyzed, thus driving DNA branch migration. The RuvB motors rotate together with the DNA substrate, which together with the progressing nucleotide cycle form the mechanistic basis for DNA recombination by continuous HJ branch migration. Branch migration allows RuvC to scan DNA until it finds its consensus sequence, where it cleaves and resolves cruciform DNA. The chain is Holliday junction branch migration complex subunit RuvB from Desulfitobacterium hafniense (strain DSM 10664 / DCB-2).